The primary structure comprises 1220 residues: Plasma membrane calcium-transporting ATPase 1 (1220 aa).

At glycine 2 the chain carries N-acetylglycine. Over 2–105 (GDMANNSVAY…KTFLQLVWEA (104 aa)) the chain is Cytoplasmic. 2 positions are modified to phosphoserine: serine 8 and serine 17. The helical transmembrane segment at 106–126 (LQDVTLIILEIAAIVSLGLSF) threads the bilayer. Residues 127 to 154 (YQPPEGDNALCGEVSVGEEEGEGETGWI) lie on the Extracellular side of the membrane. A helical membrane pass occupies residues 155–175 (EGAAILLSVVCVVLVTAFNDW). The Cytoplasmic portion of the chain corresponds to 176 to 366 (SKEKQFRGLQ…KEKSVLQGKL (191 aa)). The tract at residues 297 to 356 (EEEKKDEKKKEKKNKKQDGAIENRNKAKAQDGAAMEMQPLKSEEGGDGDEKDKKKANLPK) is disordered. Composition is skewed to basic and acidic residues over residues 312 to 325 (KQDG…KAKA) and 337 to 356 (KSEE…NLPK). The residue at position 338 (serine 338) is a Phosphoserine. Residues 367 to 386 (TKLAVQIGKAGLLMSAITVI) traverse the membrane as a helical segment. At 387–418 (ILVLYFVIDTFWVQKRPWLAECTPIYIQYFVK) the chain is on the extracellular side. A helical membrane pass occupies residues 419–439 (FFIIGVTVLVVAVPEGLPLAV). The Cytoplasmic portion of the chain corresponds to 440–855 (TISLAYSVKK…RNVYDSISKF (416 aa)). Catalysis depends on aspartate 475, which acts as the 4-aspartylphosphate intermediate. Mg(2+)-binding residues include aspartate 475, threonine 477, and aspartate 797. The chain crosses the membrane as a helical span at residues 856 to 876 (LQFQLTVNVVAVIVAFTGACI). At 877–882 (TQDSPL) the chain is on the extracellular side. The helical transmembrane segment at 883–903 (KAVQMLWVNLIMDTLASLALA) threads the bilayer. Residues 904–927 (TEPPTESLLLRKPYGRNKPLISRT) are Cytoplasmic-facing. The chain crosses the membrane as a helical span at residues 928–948 (MMKNILGHAFYQLVVVFTLLF). Topologically, residues 949 to 971 (AGEKFFDIDSGRNAPLHAPPSEH) are extracellular. The chain crosses the membrane as a helical span at residues 972 to 991 (YTIVFNTFVLMQLFNEINAR). At 992–1005 (KIHGERNVFEGIFN) the chain is on the cytoplasmic side. A helical transmembrane segment spans residues 1006 to 1027 (NAIFCTIVLGTFVVQIIIVQFG). Residues 1028–1039 (GKPFSCSELSIE) lie on the Extracellular side of the membrane. Residues 1040–1060 (QWLWSIFLGMGTLLWGQLIST) form a helical membrane-spanning segment. The Cytoplasmic portion of the chain corresponds to 1061 to 1220 (IPTSRLKFLK…SPLHSLETSL (160 aa)). A calmodulin-binding subdomain A region spans residues 1100-1117 (LRRGQILWFRGLNRIQTQ). Position 1116 is a phosphothreonine; by PKC (threonine 1116). The required for basolateral membrane targeting stretch occupies residues 1118–1220 (IRVVNAFRSS…SPLHSLETSL (103 aa)). Phosphoserine is present on residues serine 1140 and serine 1155. Positions 1160 to 1220 (PLIDDTDAED…SPLHSLETSL (61 aa)) are disordered. Threonine 1165 is modified (phosphothreonine). A phosphoserine mark is found at serine 1178 and serine 1182. The span at 1200 to 1220 (MNKSATSSSPGSPLHSLETSL) shows a compositional bias: polar residues.

This sequence belongs to the cation transport ATPase (P-type) (TC 3.A.3) family. Type IIB subfamily. In terms of assembly, monomer. Dimer. Oligomer. Calmodulin binding. Interacts with PDZD11. Interacts with SLC35G1 and STIM1. Interacts with YWHAE; interacts with the monomeric and dimeric forms of the YWHAE but prefer the monomer form; this interaction inhibits calcium-transporting ATPase activity. Interacts with NPTN; this interaction stabilizes ATP2B1 and increases ATPase activity; this interaction controls T cell calcium homeostasis following T cell activation. Interacts with EPB41; regulates small intestinal calcium absorption through regulation of membrane expression of ATP2B1. Expressed in the retina, with strongest expression in the outer plexiform layer and lower expression levels in the inner nuclear layer and the inner plexiform layer. Specifically expressed in the following retinal cell types: photoreceptor cells, cone bipolar cells and horizontal cells. Expressed in osteoclasts (at protein level). Expressed at highest levels in brain, intestine, kidney, and stomach, and at lower levels in liver, lung, aorta, portal vein, urinary bladder, diaphragm, seminal vesicles and testes. Expressed in small intestinal epithelium.

The protein localises to the cell membrane. The protein resides in the basolateral cell membrane. Its subcellular location is the synapse. It localises to the presynaptic cell membrane. It is found in the cytoplasmic vesicle. The protein localises to the secretory vesicle. The protein resides in the synaptic vesicle membrane. The catalysed reaction is Ca(2+)(in) + ATP + H2O = Ca(2+)(out) + ADP + phosphate + H(+). Functionally, catalyzes the hydrolysis of ATP coupled with the transport of calcium from the cytoplasm to the extracellular space thereby maintaining intracellular calcium homeostasis. Plays a role in blood pressure regulation through regulation of intracellular calcium concentration and nitric oxide production leading to regulation of vascular smooth muscle cells vasoconstriction. Positively regulates bone mineralization through absorption of calcium from the intestine. Plays dual roles in osteoclast differentiation and survival by regulating RANKL-induced calcium oscillations in preosteoclasts and mediating calcium extrusion in mature osteoclasts. Regulates insulin sensitivity through calcium/calmodulin signaling pathway by regulating AKT1 activation and NOS3 activation in endothelial cells. May play a role in synaptic transmission by modulating calcium and proton dynamics at the synaptic vesicles. The polypeptide is Plasma membrane calcium-transporting ATPase 1 (Mus musculus (Mouse)).